The chain runs to 424 residues: 3-phosphoshikimate 1-carboxyvinyltransferase (424 aa).

Residues lysine 21, serine 22, and arginine 26 each coordinate 3-phosphoshikimate. Lysine 21 contributes to the phosphoenolpyruvate binding site. Phosphoenolpyruvate-binding residues include glycine 91 and arginine 119. 4 residues coordinate 3-phosphoshikimate: serine 164, glutamine 166, aspartate 310, and lysine 337. Residue glutamine 166 coordinates phosphoenolpyruvate. Aspartate 310 functions as the Proton acceptor in the catalytic mechanism. Residues arginine 341 and arginine 382 each contribute to the phosphoenolpyruvate site.

Belongs to the EPSP synthase family. As to quaternary structure, monomer.

It is found in the cytoplasm. It carries out the reaction 3-phosphoshikimate + phosphoenolpyruvate = 5-O-(1-carboxyvinyl)-3-phosphoshikimate + phosphate. It functions in the pathway metabolic intermediate biosynthesis; chorismate biosynthesis; chorismate from D-erythrose 4-phosphate and phosphoenolpyruvate: step 6/7. Functionally, catalyzes the transfer of the enolpyruvyl moiety of phosphoenolpyruvate (PEP) to the 5-hydroxyl of shikimate-3-phosphate (S3P) to produce enolpyruvyl shikimate-3-phosphate and inorganic phosphate. The protein is 3-phosphoshikimate 1-carboxyvinyltransferase of Campylobacter hominis (strain ATCC BAA-381 / DSM 21671 / CCUG 45161 / LMG 19568 / NCTC 13146 / CH001A).